Consider the following 1099-residue polypeptide: SLIT-ROBO Rho GTPase-activating protein 3 (1099 aa).

The F-BAR domain maps to 19–314 (AQIKEIRTQL…AVDNLDSRSD (296 aa)). The segment at 205 to 225 (HEDRPQRRSSVKKIEKMKEKR) is disordered. Residues 352-392 (QTELLMRYHQLQSRLATLKIENEEVRKTLDATMQTLQDMLT) adopt a coiled-coil conformation. The tract at residues 471 to 493 (ERAECGTTRPPCLPPKPQKMRRP) is disordered. The Rho-GAP domain occupies 506-694 (GSMEAFIKDS…TIIIHHEAIF (189 aa)). Residues 744 to 803 (VEQIEAIAKFDYMGRSPRELSFKKGASLLLYHRASEDWWEGRHNGVDGLIPHQYIVVQDM) enclose the SH3 domain. The segment covering 809-820 (DSLSQKADSEAS) has biased composition (polar residues). The interval 809 to 847 (DSLSQKADSEASSGPLLDDKASSKNDLQSPTEHISDYGF) is disordered. 5 positions are modified to phosphoserine: Ser-817, Ser-820, Ser-821, Ser-837, and Ser-858. Disordered regions lie at residues 861 to 911 (AAIP…SPEK) and 926 to 950 (PDKKALSEGHSMRSTCGSTRHSSLG). The segment covering 926–936 (PDKKALSEGHS) has biased composition (basic and acidic residues). A compositionally biased stretch (polar residues) spans 937–947 (MRSTCGSTRHS). A coiled-coil region spans residues 952 to 987 (HKSLEAEALAEDIEKTMSTALHELRELERQNTVKQA). Ser-954 carries the phosphoserine modification. Residues 995-1099 (LEPLKNPPGP…NSSADKSGTM (105 aa)) form a disordered region. Low complexity-rich tracts occupy residues 1026-1038 (RRSSSSSTEMMTT) and 1060-1074 (VRPVVQHRSSSSSSS). The segment covering 1089 to 1099 (PNSSADKSGTM) has biased composition (polar residues).

In terms of assembly, homodimer. Forms a heterooligomer with SRGAP1 and SRGAP2 through its F-BAR domain. Interacts with WASF1. Probably interacts with ROBO1. Interacts with FASLG. In terms of tissue distribution, highly expressed in adult and fetal brain. Expressed at low levels in kidney. Isoform 3 is expressed in the kidney but is absent in the brain.

In terms of biological role, GTPase-activating protein for RAC1 and perhaps Cdc42, but not for RhoA small GTPase. May attenuate RAC1 signaling in neurons. In Homo sapiens (Human), this protein is SLIT-ROBO Rho GTPase-activating protein 3 (SRGAP3).